Here is a 590-residue protein sequence, read N- to C-terminus: Oleate hydratase (590 aa).

FAD-binding residues include A33, E56, S64, and E82. Residue E82 is the Proton acceptor of the active site. Catalysis depends on Y200, which acts as the Proton donor. Positions 249, 291, 508, and 512 each coordinate FAD.

The protein belongs to the oleate hydratase family. In terms of assembly, monomer and homodimer. Both forms seem to be active. The cofactor is FAD.

The catalysed reaction is (R)-10-hydroxyoctadecanoate = (9Z)-octadecenoate + H2O. It catalyses the reaction (9Z)-octadecenoate + H2O = 10-hydroxyoctadecanoate. It carries out the reaction (9Z)-hexadecenoate + H2O = 10-hydroxyhexadecanoate. The enzyme catalyses (9Z,12Z)-octadecadienoate + H2O = (12Z)-10-hydroxyoctadecenoate. The catalysed reaction is (12Z)-10-hydroxyoctadecenoate + H2O = 10,13-dihydroxyoctadecanoate. It catalyses the reaction (9Z,12Z,15Z)-octadecatrienoate + H2O = (12Z,15Z)-10-hydroxyoctadecadienoate. It participates in lipid metabolism; fatty acid metabolism. Its function is as follows. Catalyzes the hydration of oleate at its cis-9-double bond to yield 10-hydroxyoctadecanoate, probably in the (R) configuration, and of linoleate at its cis-9- and cis-12-double bond to yield 10-hydroxy-12-octadecenoate and 10,13-dihydroxyoctadecanoate. Is not active on trans-double bonds and esterified fatty acids as substrate; is only active on cis-9- and/or cis-12-double bond of C16 and C18 fatty acids without any trans-configurations, producing 10-hydroxy and 10,13-dihydroxy derivatives. Appears to play a role in oleic acid detoxification and bacterial virulence. The protein is Oleate hydratase (sph) of Streptococcus pyogenes serotype M49 (strain NZ131).